A 360-amino-acid chain; its full sequence is MAIATTKTALTTIMNWMTFTDDSKEQLKIVEGRLFQSCEVSYEAKYVPVRFKRGEVYTVTVRPREAENLNGEAIVFIPGLGAGVAMFTANFNSCAKNHAVHSFDPLGFGRSSRSRFSDDNAIAELEMVEVMEDWRKAMGIEKMYIIGHAFGGYLASAYALENPSRVAHLILVDPWGFAEKVETTEKLIKPYAWMSFLGGVAGYFNPFSPMRWMGPYAPAIVKKLRPDLLLRFPGLHDYDIYKYVYYLNLPNPTGETAFMNMTLPVGWAKRPMIKRFNGIDKNVGVSFIYGSKSWIDPGPAIDIQSTRENAYVDIKIVRGAGTHVYADDPAAFNEIVSDVVEGRLSNPSNDFEIEECCHSD.

In terms of domain architecture, AB hydrolase-1 spans 73–203 (AIVFIPGLGA…MSFLGGVAGY (131 aa)).

This sequence belongs to the peptidase S33 family. ABHD4/ABHD5 subfamily. In terms of assembly, interacts with atgl-1.

Its subcellular location is the lipid droplet. Acts coordinately with atgl-1 within the lipolytic cascade to distribute stored energy to tissues during nutritional deprivation. The sequence is that of Abhydrolase domain-containing protein lid-1 from Caenorhabditis elegans.